We begin with the raw amino-acid sequence, 258 residues long: Type III pantothenate kinase (258 aa).

An ATP-binding site is contributed by 6–13 (DVGNTNIV). Substrate-binding positions include Tyr-100 and 107–110 (GADR). Asp-109 serves as the catalytic Proton acceptor. Asp-129 is a binding site for K(+). Thr-132 contacts ATP. Substrate is bound at residue Thr-184.

It belongs to the type III pantothenate kinase family. As to quaternary structure, homodimer. NH4(+) is required as a cofactor. It depends on K(+) as a cofactor.

The protein resides in the cytoplasm. The enzyme catalyses (R)-pantothenate + ATP = (R)-4'-phosphopantothenate + ADP + H(+). It functions in the pathway cofactor biosynthesis; coenzyme A biosynthesis; CoA from (R)-pantothenate: step 1/5. Functionally, catalyzes the phosphorylation of pantothenate (Pan), the first step in CoA biosynthesis. The chain is Type III pantothenate kinase from Desulfitobacterium hafniense (strain DSM 10664 / DCB-2).